Reading from the N-terminus, the 182-residue chain is Homeobox protein pnx (182 aa).

The segment at 1 to 34 (MHEETSNSTLQGKTSFSIADILDPAKFNGTRETR) is important for interaction with tle3a. The segment at 24–63 (PAKFNGTRETREISNNRESPKTTSPTQDPSAPNIANASAA) is disordered. Over residues 29–43 (GTRETREISNNRESP) the composition is skewed to basic and acidic residues. Residues 52-63 (PSAPNIANASAA) are compositionally biased toward low complexity. The homeobox DNA-binding region spans 67–126 (SKRIRTAFTLDQLRILERSFQSSHYLSVFERHCIASALGLSETQVKIWFQNRRTKWKKEL).

This sequence belongs to the NK-1 homeobox family. Interacts with tle3a.

Its subcellular location is the nucleus. Its function is as follows. Transcriptional repressor. Activity as a repressor is enhanced by binding to the corepressor tle3a. The polypeptide is Homeobox protein pnx (Danio rerio (Zebrafish)).